A 376-amino-acid chain; its full sequence is Lipid-A-disaccharide synthase (376 aa).

It belongs to the LpxB family.

The catalysed reaction is a lipid X + a UDP-2-N,3-O-bis[(3R)-3-hydroxyacyl]-alpha-D-glucosamine = a lipid A disaccharide + UDP + H(+). The protein operates within bacterial outer membrane biogenesis; LPS lipid A biosynthesis. Functionally, condensation of UDP-2,3-diacylglucosamine and 2,3-diacylglucosamine-1-phosphate to form lipid A disaccharide, a precursor of lipid A, a phosphorylated glycolipid that anchors the lipopolysaccharide to the outer membrane of the cell. The sequence is that of Lipid-A-disaccharide synthase from Pseudomonas fluorescens (strain Pf0-1).